Reading from the N-terminus, the 292-residue chain is Retinal homeobox protein Rx3 (292 aa).

The tract at residues 1-27 (MRLVGSQYKDMEDRLSPSARLVRSPGS) is disordered. The short motif at 32-39 (HSIESILG) is the Octapeptide motif element. 2 disordered regions span residues 53-72 (GSGK…DSNK) and 85-107 (SPDL…KKHR). Basic and acidic residues-rich tracts occupy residues 57–72 (TGKD…DSNK) and 92–102 (DGGKLSDDENP). The homeobox DNA-binding region spans 106 to 165 (HRRNRTTFTTFQLHELERAFEKSHYPDVYSREELALKVNLPEVRVQVWFQNRRAKWRRQE). An OAR motif is present at residues 272-285 (TSIASLRMKAKEHI). A Nuclear localization signal motif is present at residues 278 to 282 (RMKAK).

Belongs to the paired homeobox family. Bicoid subfamily.

It localises to the nucleus. In terms of biological role, plays a critical role in eye formation by regulating the initial specification of retinal cells and/or their subsequent proliferation. This chain is Retinal homeobox protein Rx3 (rx3), found in Danio rerio (Zebrafish).